Reading from the N-terminus, the 1353-residue chain is Protein timeless homolog (1353 aa).

Disordered regions lie at residues 798 to 825, 1150 to 1291, and 1306 to 1335; these read VAED…EEEV, KPTR…LEED, and GGSI…DPFT. The segment covering 802 to 825 has biased composition (acidic residues); sequence RAEDPDEEDPAEPYDSEQEEEEEV. Basic and acidic residues-rich tracts occupy residues 1150 to 1160 and 1168 to 1182; these read KPTRQVERHLE and ERSK…KFDD. 2 stretches are compositionally biased toward acidic residues: residues 1183-1206 and 1217-1226; these read FLND…EEEE and DSEDEEEHIE. Basic and acidic residues predominate over residues 1227–1239; sequence QEEAQKKLEKVAE. Acidic residues-rich tracts occupy residues 1261–1273, 1282–1291, and 1323–1332; these read DSSD…DSAE, AEDDSDLEED, and EEREDDDDED.

The protein belongs to the timeless family. As to quaternary structure, associates with the cohesin complex. Interacts with smc-1, smc-3, scc-1 and scc-3.

It is found in the nucleus. Its function is as follows. Plays an important role in chromosome cohesion during both mitosis and meiosis. In prophase of meiosis, it is involved in the formation of the synaptonemal complex (SC) and specifically, in the diplotene and diakinesis phases of prophase, it stabilizes the association of homologous chromosomes during synapsis and sister chromatid cohesion. It regulates cohesin subunits to promote meiotic chromosome cohesion and localizes non-SMC (structural maintenance of chromosome) cohesin subunits to chromatin prior to or during pre-meiotic S phase. Implicated in influencing either the stability or loading of meiotic-specific cohesin subunit, rec8. Controls cell cycle exit and cell fusion to prevent the premature differentiation into adult cells. Specifically, regulates hypodermal seam cell identity. The protein is Protein timeless homolog of Caenorhabditis elegans.